Reading from the N-terminus, the 132-residue chain is Small ribosomal subunit protein uS8 (132 aa).

This sequence belongs to the universal ribosomal protein uS8 family. In terms of assembly, part of the 30S ribosomal subunit. Contacts proteins S5 and S12.

Functionally, one of the primary rRNA binding proteins, it binds directly to 16S rRNA central domain where it helps coordinate assembly of the platform of the 30S subunit. This Rubrobacter xylanophilus (strain DSM 9941 / JCM 11954 / NBRC 16129 / PRD-1) protein is Small ribosomal subunit protein uS8.